The following is a 735-amino-acid chain: Wall-associated receptor kinase 1 (735 aa).

The first 24 residues, 1 to 24, serve as a signal peptide directing secretion; sequence MKVQEGLFLVAIFFSLACTQLVKG. Over 25–331 the chain is Extracellular; the sequence is QHQPGENCQN…TTTMSCKRKE (307 aa). Residues N38, N56, N80, N90, N113, N140, N209, N235, and N250 are each glycosylated (N-linked (GlcNAc...) asparagine). The polygalacturonic acid-binding stretch occupies residues 67–254; the sequence is RPHVLSDIEV…SICGGNSTCL (188 aa). The EGF-like 1 domain maps to 234–281; sequence GNQTCEQVGSTSICGGNSTCLDSTPRNGYICRCNEGFDGNPYLSAGCQ. 6 disulfide bridges follow: C238/C253, C247/C264, C266/C280, C286/C303, C297/C312, and C314/C327. Residues 282 to 328 enclose the EGF-like 2; calcium-binding domain; sequence DVNECTTSSTIHRHNCSDPKTCRNKVGGFYCKCQSGYRLDTTTMSCK. An N-linked (GlcNAc...) asparagine glycan is attached at N296. A helical membrane pass occupies residues 332–352; the sequence is FAWTTILLVTTIGFLVILLGV. At 353-735 the chain is on the cytoplasmic side; the sequence is ACIQQRMKHL…VAILDIETGR (383 aa). T398 bears the Phosphothreonine mark. In terms of domain architecture, Protein kinase spans 409 to 692; it reads YAESRILGQG…RVEKTKHKWS (284 aa). ATP is bound by residues 415–423 and K437; that span reads LGQGGQGTV. Phosphotyrosine is present on Y482. The active-site Proton acceptor is D534. T568 and T573 each carry phosphothreonine. Y581 carries the post-translational modification Phosphotyrosine.

This sequence belongs to the protein kinase superfamily. Ser/Thr protein kinase family. Interacts with the glycine-rich proteins GRP3 and GRP3S, and the type 2C protein phosphatase KAPP. Component of a 500 kDa complex, composed of WAK1, GRP3 and KAPP. Interacts with the oxygen-evolving enhancer protein 2 (OEE2). As to expression, predominantly expressed in green tissues such as stems and leaves. Detected at organ junctions.

It localises to the membrane. It catalyses the reaction L-seryl-[protein] + ATP = O-phospho-L-seryl-[protein] + ADP + H(+). The catalysed reaction is L-threonyl-[protein] + ATP = O-phospho-L-threonyl-[protein] + ADP + H(+). Its function is as follows. Serine/threonine-protein kinase that may function as a signaling receptor of extracellular matrix component. Binding to pectin may have significance in the control of cell expansion, morphogenesis and development. Required during plant's response to pathogen infection and in plant defense against heavy metal toxicity. Phosphorylates the oxygen-evolving enhancer protein 2 (OEE2) in an GRP-3-dependent manner. This chain is Wall-associated receptor kinase 1 (WAK1), found in Arabidopsis thaliana (Mouse-ear cress).